Reading from the N-terminus, the 58-residue chain is Protein translocase subunit SecE (58 aa).

A helical membrane pass occupies residues 36-56; sequence ILLIGFIGFLMFAIMSLLPGV.

Belongs to the SecE/SEC61-gamma family. Component of the Sec protein translocase complex. Heterotrimer consisting of SecY (alpha), SecG (beta) and SecE (gamma) subunits. The heterotrimers can form oligomers, although 1 heterotrimer is thought to be able to translocate proteins. Interacts with the ribosome. May interact with SecDF, and other proteins may be involved.

Its subcellular location is the cell membrane. Its function is as follows. Essential subunit of the Sec protein translocation channel SecYEG. Clamps together the 2 halves of SecY. May contact the channel plug during translocation. This Halorubrum lacusprofundi (strain ATCC 49239 / DSM 5036 / JCM 8891 / ACAM 34) protein is Protein translocase subunit SecE.